Reading from the N-terminus, the 1214-residue chain is Lysine-specific demethylase 3A (1214 aa).

Phosphoserine occurs at positions 150 and 209. Over residues 194–211 (TPSSNRQQNTPQAANSPP) the composition is skewed to polar residues. Disordered regions lie at residues 194 to 215 (TPSS…NIGA), 271 to 293 (PKGS…STPQ), and 310 to 398 (KAEL…KSVL). The residue at position 330 (Ser330) is a Phosphoserine. Positions 361–370 (LGSQSQNLKE) are enriched in polar residues. The span at 371 to 380 (TSVKVDHDSC) shows a compositional bias: basic and acidic residues. The span at 381–391 (CTRSSNKTQTP) shows a compositional bias: polar residues. The C6-type zinc finger occupies 546–571 (CDVCDTTIFNLHWVCPRCGFGVCVDC). The LXXLL motif motif lies at 769–773 (LRNLL). Lys779 is subject to N6-acetyllysine. In terms of domain architecture, JmjC spans 944 to 1167 (MPSRFDDLMA…HCFWLTQEFR (224 aa)). Residues His1006, Asp1008, and His1135 each coordinate Fe cation.

This sequence belongs to the JHDM2 histone demethylase family. As to quaternary structure, interacts with VRK1. Fe(2+) serves as cofactor. In terms of tissue distribution, testis specific. Expressed only in male germ cells.

The protein localises to the cytoplasm. It is found in the nucleus. It carries out the reaction N(6),N(6)-dimethyl-L-lysyl(9)-[histone H3] + 2 2-oxoglutarate + 2 O2 = L-lysyl(9)-[histone H3] + 2 formaldehyde + 2 succinate + 2 CO2. In terms of biological role, histone demethylase that specifically demethylates 'Lys-9' of histone H3, thereby playing a central role in histone code. Preferentially demethylates mono- and dimethylated H3 'Lys-9' residue, with a preference for dimethylated residue, while it has weak or no activity on trimethylated H3 'Lys-9'. Demethylation of Lys residue generates formaldehyde and succinate. Involved in hormone-dependent transcriptional activation, by participating in recruitment to androgen-receptor target genes, resulting in H3 'Lys-9' demethylation and transcriptional activation. Involved in spermatogenesis by regulating expression of target genes such as PRM1 and TNP1 which are required for packaging and condensation of sperm chromatin. Directly regulates expression of PPARA and UCP1 and is involved in obesity resistance. The polypeptide is Lysine-specific demethylase 3A (Kdm3a) (Rattus norvegicus (Rat)).